Reading from the N-terminus, the 220-residue chain is Claudin-24 (220 aa).

Over 1–10 the chain is Cytoplasmic; it reads MALIFRTAMQ. Residues 11-31 form a helical membrane-spanning segment; sequence SVGLLLSLLGWILSIITTYLP. The Extracellular segment spans residues 32 to 81; sequence HWKNLNLDLNEMENWTMGLWQTCVIQEEVGMQCKDFDSFLALPAELRVSR. A helical membrane pass occupies residues 82–102; the sequence is ILMFLSNGLGFLGLLVSGFGL. Residues 103 to 117 are Cytoplasmic-facing; the sequence is DCLRIGESQRDLKRR. Residues 118 to 138 traverse the membrane as a helical segment; that stretch reads LLILGGILSWASGITALVPVS. The Extracellular segment spans residues 139 to 161; the sequence is WVAHKTVQEFWDENVPDFVPRWE. The chain crosses the membrane as a helical span at residues 162 to 182; sequence FGEALFLGWFAGLSLLLGGCL. At 183 to 220 the chain is on the cytoplasmic side; it reads LNCAACSSHAPLALGHYAVAQMQTQCPYLEDGTADPQV.

This sequence belongs to the claudin family.

The protein localises to the cell junction. It localises to the tight junction. Its subcellular location is the cell membrane. Plays a major role in tight junction-specific obliteration of the intercellular space, through calcium-independent cell-adhesion activity. The protein is Claudin-24 of Homo sapiens (Human).